A 273-amino-acid polypeptide reads, in one-letter code: Putative phosphoenolpyruvate synthase regulatory protein (273 aa).

Glycine 153–threonine 160 provides a ligand contact to ADP.

This sequence belongs to the pyruvate, phosphate/water dikinase regulatory protein family. PSRP subfamily.

It catalyses the reaction [pyruvate, water dikinase] + ADP = [pyruvate, water dikinase]-phosphate + AMP + H(+). The enzyme catalyses [pyruvate, water dikinase]-phosphate + phosphate + H(+) = [pyruvate, water dikinase] + diphosphate. In terms of biological role, bifunctional serine/threonine kinase and phosphorylase involved in the regulation of the phosphoenolpyruvate synthase (PEPS) by catalyzing its phosphorylation/dephosphorylation. The polypeptide is Putative phosphoenolpyruvate synthase regulatory protein (Polaromonas sp. (strain JS666 / ATCC BAA-500)).